A 512-amino-acid chain; its full sequence is 2,3-bisphosphoglycerate-independent phosphoglycerate mutase (512 aa).

The Mn(2+) site is built by Asp-11 and Ser-61. The Phosphoserine intermediate role is filled by Ser-61. Substrate-binding positions include His-122, 152–153 (RD), Arg-184, Arg-190, 259–262 (RADR), and Lys-332. Mn(2+)-binding residues include Asp-399, His-403, Asp-440, His-441, and His-459.

This sequence belongs to the BPG-independent phosphoglycerate mutase family. In terms of assembly, monomer. The cofactor is Mn(2+).

The enzyme catalyses (2R)-2-phosphoglycerate = (2R)-3-phosphoglycerate. It participates in carbohydrate degradation; glycolysis; pyruvate from D-glyceraldehyde 3-phosphate: step 3/5. In terms of biological role, catalyzes the interconversion of 2-phosphoglycerate and 3-phosphoglycerate. In Francisella philomiragia subsp. philomiragia (strain ATCC 25017 / CCUG 19701 / FSC 153 / O#319-036), this protein is 2,3-bisphosphoglycerate-independent phosphoglycerate mutase.